We begin with the raw amino-acid sequence, 227 residues long: Small ribosomal subunit protein uS3 (227 aa).

Positions 39 to 108 (IRKFVEERYK…DVTVNVDEVK (70 aa)) constitute a KH type-2 domain.

This sequence belongs to the universal ribosomal protein uS3 family. In terms of assembly, part of the 30S ribosomal subunit. Forms a tight complex with proteins S10 and S14.

Binds the lower part of the 30S subunit head. Binds mRNA in the 70S ribosome, positioning it for translation. This is Small ribosomal subunit protein uS3 from Persephonella marina (strain DSM 14350 / EX-H1).